The primary structure comprises 672 residues: MKAIVFAYHDIGCVGLEALKLAGYEIQAVFTHSDAPGENHFYASVAKAAAEMDVPVFAPEDVNHPLWVNRIRELAPDVIFSFYYRTLLSDDILQLPSFGAFNLHGSLLPRYRGRAPVNWVLVNGETQTGVTLHKMVSRADAGDIVAQSVVEIDDEDTALTLHGKCRTTAAALLAQQLPLIRSREIMLTPQDESQASYFGRRTAADGLIDWQKSAREINNLIRAVTEPYPGAFTFLGERKVVIWRARVLKNDSVKANGVKQEPGSIISTSPLVVSCGEDALEIVSGQSESGLYMSGSRLAAEMGMVPQAKLGNLASRVQRRRTRVLILGVNGFIGNHLTERLLRDDRYEIYGLDISSDAIARFLGDPRFHFVEGDISIHNEWIEYHIKKCDVILPLVAIATPIEYTRNPLRVFELDFEENLKIVRDCVRYNKRIVFPSTSEVYGMCDDKEFDEDTSRLIVGPINKQRWIYSVSKQLLDRVIWAYGAKNGLRFTLFRPFNWMGPRLDTLDAARIGSSRAITQLILNLVEGSPIKLVDGGAQKRCFTDIHDGIEALFRIIENRNGQCDGQIINIGNPHNEASIRELGDMLLTSFNAHPLRDRFPPFAGFIEVESSSYYGKGYQDVAHRTPSIRNAKRLLEWEPTVKMEQTVAETLDYFLRTVDPQHADNVTDTQG.

The tract at residues 1 to 310 is formyltransferase ArnAFT; sequence MKAIVFAYHD…EMGMVPQAKL (310 aa). H104 serves as the catalytic Proton donor; for formyltransferase activity. Residues R114 and 136–140 contribute to the (6R)-10-formyltetrahydrofolate site; that span reads VSRAD. The interval 320–672 is dehydrogenase ArnADH; the sequence is RRTRVLILGV…HADNVTDTQG (353 aa). NAD(+) contacts are provided by residues D353 and 374-375; that span reads DI. Residues A399, Y404, and 438-439 contribute to the UDP-alpha-D-glucuronate site; that span reads TS. Residue E440 is the Proton acceptor; for decarboxylase activity of the active site. Residues R466, N498, 532–541, and Y619 each bind UDP-alpha-D-glucuronate; that span reads KLVDGGAQKR. R625 functions as the Proton donor; for decarboxylase activity in the catalytic mechanism.

It in the N-terminal section; belongs to the Fmt family. UDP-L-Ara4N formyltransferase subfamily. In the C-terminal section; belongs to the NAD(P)-dependent epimerase/dehydratase family. UDP-glucuronic acid decarboxylase subfamily. In terms of assembly, homohexamer, formed by a dimer of trimers.

The catalysed reaction is UDP-alpha-D-glucuronate + NAD(+) = UDP-beta-L-threo-pentopyranos-4-ulose + CO2 + NADH. It carries out the reaction UDP-4-amino-4-deoxy-beta-L-arabinose + (6R)-10-formyltetrahydrofolate = UDP-4-deoxy-4-formamido-beta-L-arabinose + (6S)-5,6,7,8-tetrahydrofolate + H(+). It functions in the pathway nucleotide-sugar biosynthesis; UDP-4-deoxy-4-formamido-beta-L-arabinose biosynthesis; UDP-4-deoxy-4-formamido-beta-L-arabinose from UDP-alpha-D-glucuronate: step 1/3. Its pathway is nucleotide-sugar biosynthesis; UDP-4-deoxy-4-formamido-beta-L-arabinose biosynthesis; UDP-4-deoxy-4-formamido-beta-L-arabinose from UDP-alpha-D-glucuronate: step 3/3. It participates in bacterial outer membrane biogenesis; lipopolysaccharide biosynthesis. In terms of biological role, bifunctional enzyme that catalyzes the oxidative decarboxylation of UDP-glucuronic acid (UDP-GlcUA) to UDP-4-keto-arabinose (UDP-Ara4O) and the addition of a formyl group to UDP-4-amino-4-deoxy-L-arabinose (UDP-L-Ara4N) to form UDP-L-4-formamido-arabinose (UDP-L-Ara4FN). The modified arabinose is attached to lipid A and is required for resistance to polymyxin and cationic antimicrobial peptides. This chain is Bifunctional polymyxin resistance protein ArnA, found in Pectobacterium carotovorum subsp. carotovorum (strain PC1).